The primary structure comprises 345 residues: Phenylalanine--tRNA ligase alpha subunit (345 aa).

Glu259 provides a ligand contact to Mg(2+).

The protein belongs to the class-II aminoacyl-tRNA synthetase family. Phe-tRNA synthetase alpha subunit type 1 subfamily. In terms of assembly, tetramer of two alpha and two beta subunits. Mg(2+) serves as cofactor.

It localises to the cytoplasm. It carries out the reaction tRNA(Phe) + L-phenylalanine + ATP = L-phenylalanyl-tRNA(Phe) + AMP + diphosphate + H(+). In Lactococcus lactis subsp. cremoris (strain SK11), this protein is Phenylalanine--tRNA ligase alpha subunit.